The following is a 222-amino-acid chain: Probable septum site-determining protein MinC (222 aa).

Belongs to the MinC family. Interacts with MinD and FtsZ.

Its function is as follows. Cell division inhibitor that blocks the formation of polar Z ring septums. Rapidly oscillates between the poles of the cell to destabilize FtsZ filaments that have formed before they mature into polar Z rings. Prevents FtsZ polymerization. This Lysinibacillus sphaericus (strain C3-41) protein is Probable septum site-determining protein MinC.